The chain runs to 95 residues: Aspartyl/glutamyl-tRNA(Asn/Gln) amidotransferase subunit C (95 aa).

It belongs to the GatC family. Heterotrimer of A, B and C subunits.

It catalyses the reaction L-glutamyl-tRNA(Gln) + L-glutamine + ATP + H2O = L-glutaminyl-tRNA(Gln) + L-glutamate + ADP + phosphate + H(+). The enzyme catalyses L-aspartyl-tRNA(Asn) + L-glutamine + ATP + H2O = L-asparaginyl-tRNA(Asn) + L-glutamate + ADP + phosphate + 2 H(+). Functionally, allows the formation of correctly charged Asn-tRNA(Asn) or Gln-tRNA(Gln) through the transamidation of misacylated Asp-tRNA(Asn) or Glu-tRNA(Gln) in organisms which lack either or both of asparaginyl-tRNA or glutaminyl-tRNA synthetases. The reaction takes place in the presence of glutamine and ATP through an activated phospho-Asp-tRNA(Asn) or phospho-Glu-tRNA(Gln). This is Aspartyl/glutamyl-tRNA(Asn/Gln) amidotransferase subunit C from Clostridium botulinum (strain ATCC 19397 / Type A).